A 1300-amino-acid polypeptide reads, in one-letter code: MAVPALWPWGVHLLMSLLSLGSGLDTLEVCPSLDIRSEVTELRRLENCSVVEGHLQILLMFAATGEDFRGLSFPRLTQVTDYLLLFRVYGLESLRDLFPNLTVIRGTRLFLGYALIIFEMPHLRDVGLPSLGAVLRGAVRVEKNQELCHLSTIDWGLLQPAPGTNHIVGNKLGEECADVCPGVLGAAGEPCSRTTFSGRTDYRCWTSSHCQKVCPCPRGMACTAGGDCCHSECLGGCSQPEDPRACVACRHLYFQGVCLRACPPGTYQYESWRCVTAELCAHLREVPGLATTFGIYEGSCLAQCPPGFTRNGSSIFCHKCEGLCPKECKVGTKTIDSVQATQDLVGCTHVEGNLILNLRQGYNLEPELQRNLGLVETITGFLKIKHSFALVTLGFFKNLKLIRGDSMVDGNYTLYVLDNQNLQQLGSWVTAGLTIPVGKIYFAFNPRLCLEHIYQLEEVTGTRGRQSKAEINPRTNGDRAACQTRTLRFVFNLTEEDRILLRWERYEPLEARDLLSFIVYYKESPFQNATEHVGPDACGTQSWNLLDVELPLSRTQEPGVTLAPLKPWTQYAVFVRAITLTTAEDSPHQGAQSPIVYLRTLPAAPTVPQDVISTSNSSSHLLVRWKPPVQRNGNITYYLVLWQRLAEDGDLYINDYCHRGLRLPTSSHDTRFDREDPALEAEPEQGCCPCQHSPPGQALPALEAQEVTFQKKFENFLHHAITIPKAPWKVTSINKNPQRDSERHRREAGLLRLGKNNSDFEIQEDKVPRERAILSGLRHFTEYRIDIHACNHAAHTVGCSAATFVFARTMPHREADGIPGKVAWKAAGKSSVTLHWLEPPDPNGLILKYEIKYRRLGEEATVLCVSRLRYAKVGGVHLALLPPGNYSAKVRATSLAGNGSWTDGVTFYITDLEEEDTGGMRIFLTVTPVGFMLLVTLAALGFFYSRKRNSTLYTSVNPEYFSASHMYVPDEWEVPREQIAIIRELGQGSFGMVYEGLARGLEAGEESTPVALKTVNELASARERVEFLKEASVMKAFKCHHVVRLLGVVSQGQPTLVIMELMTRGDLKSHLRSLRPEAENNPGLPQPALSDMIQMAGEIADGMAYLAAKKFVHRDLAARNCMVSQDFTVKIGDFGMTRDVYETDYYRKGGKGLLPVRWMAPESLKDGIFTTHSDVWSFGVVLWEIVTLAEQPYQGLSNEQVLKFVMDGGVLEELENCPIQLQELMRLCWQHSPRLRPTFVHILDRIQDELRPSFRLCSFYYSPECQRGQASLLPTEAEPDSPPTLNGASDYSAPNGGPGH.

Residues 1-26 (MAVPALWPWGVHLLMSLLSLGSGLDT) form the signal peptide. Asn-47 and Asn-100 each carry an N-linked (GlcNAc...) asparagine glycan. 9 disulfide bridges follow: Cys-214/Cys-222, Cys-216/Cys-228, Cys-229/Cys-237, Cys-233/Cys-246, Cys-249/Cys-258, Cys-262/Cys-274, Cys-280/Cys-300, Cys-304/Cys-317, and Cys-320/Cys-324. N-linked (GlcNAc...) asparagine glycosylation is present at Asn-311. N-linked (GlcNAc...) asparagine glycosylation is found at Asn-411, Asn-492, Asn-528, Asn-616, Asn-634, Asn-756, Asn-885, and Asn-898. Fibronectin type-III domains lie at 483–603 (QTRT…TLPA) and 607–707 (VPQD…AQEV). Cys-657 and Cys-864 are disulfide-bonded. At 747–921 (EAGLLRLGKN…LEEEDTGGMR (175 aa)) the chain is on the extracellular side. Positions 818 to 913 (IPGKVAWKAA…GVTFYITDLE (96 aa)) constitute a Fibronectin type-III 3 domain. The helical transmembrane segment at 922 to 943 (IFLTVTPVGFMLLVTLAALGFF) threads the bilayer. At 944 to 1300 (YSRKRNSTLY…YSAPNGGPGH (357 aa)) the chain is on the cytoplasmic side. A Protein kinase domain is found at 979–1254 (IAIIRELGQG…RIQDELRPSF (276 aa)). Residues 985–993 (LGQGSFGMV) and Lys-1013 each bind ATP. Asp-1115 functions as the Proton acceptor in the catalytic mechanism. Phosphotyrosine; by autocatalysis occurs at positions 1145 and 1146. A disordered region spans residues 1273–1300 (LPTEAEPDSPPTLNGASDYSAPNGGPGH).

Belongs to the protein kinase superfamily. Tyr protein kinase family. Insulin receptor subfamily. As to quaternary structure, probable tetramer of 2 alpha and 2 beta chains linked by disulfide bonds. The alpha chains contribute to the formation of the ligand-binding domain, while the beta chains carry the kinase domain. Post-translationally, autophosphorylated on tyrosine residues between pH 7.9 and pH 10.5. Highly expressed in the islets as well as in pancreatic beta-cells.

It localises to the membrane. It carries out the reaction L-tyrosyl-[protein] + ATP = O-phospho-L-tyrosyl-[protein] + ADP + H(+). Its function is as follows. Receptor with tyrosine-protein kinase activity. Functions as a pH sensing receptor which is activated by increased extracellular pH. Activates an intracellular signaling pathway that involves IRS1 and AKT1/PKB. The protein is Insulin receptor-related protein (Insrr) of Mus musculus (Mouse).